The primary structure comprises 496 residues: Cytochrome P450 71B14 (496 aa).

A helical transmembrane segment spans residues 1–21; it reads MIWWFIVGASFFFAFILIAKD. Cys436 is a heme binding site.

It belongs to the cytochrome P450 family. It depends on heme as a cofactor.

It localises to the membrane. This is Cytochrome P450 71B14 (CYP71B14) from Arabidopsis thaliana (Mouse-ear cress).